The sequence spans 250 residues: Proteasome subunit alpha type-4-2 (250 aa).

The 26S proteasome consists of a 20S proteasome core and two 19S regulatory subunits. The 20S proteasome core is composed of 28 subunits that are arranged in four stacked rings, resulting in a barrel-shaped structure. The two end rings are each formed by seven alpha subunits, and the two central rings are each formed by seven beta subunits. The catalytic chamber with the active sites is on the inside of the barrel.

Its subcellular location is the cytoplasm. The protein localises to the nucleus. Functionally, the proteasome is a multicatalytic proteinase complex which is characterized by its ability to cleave peptides with Arg, Phe, Tyr, Leu, and Glu adjacent to the leaving group at neutral or slightly basic pH. The proteasome has an ATP-dependent proteolytic activity. This is Proteasome subunit alpha type-4-2 from Oryza sativa subsp. indica (Rice).